The following is a 408-amino-acid chain: Phosphoglycerate kinase (408 aa).

Substrate is bound by residues 28–30 (DIN), R43, 66–69 (HQGR), R123, and R163. Residues E334 and 358–361 (GGHT) contribute to the ATP site.

This sequence belongs to the phosphoglycerate kinase family. Monomer.

It localises to the cytoplasm. It catalyses the reaction (2R)-3-phosphoglycerate + ATP = (2R)-3-phospho-glyceroyl phosphate + ADP. It participates in carbohydrate degradation; glycolysis; pyruvate from D-glyceraldehyde 3-phosphate: step 2/5. The polypeptide is Phosphoglycerate kinase (Pyrobaculum aerophilum (strain ATCC 51768 / DSM 7523 / JCM 9630 / CIP 104966 / NBRC 100827 / IM2)).